A 141-amino-acid chain; its full sequence is Ribosome maturation factor RimP (141 aa).

It belongs to the RimP family.

Its subcellular location is the cytoplasm. Required for maturation of 30S ribosomal subunits. The sequence is that of Ribosome maturation factor RimP from Laribacter hongkongensis (strain HLHK9).